A 158-amino-acid chain; its full sequence is MGVFNFEEEATSIVAPATLHKALVTDADILTPKVIDAIKSIEIVEGNGGPGTIKKLTFVEDGETKYVLHKVELVDDANWANNYSIVGGVGLPDTVEKISFEAKLSAGPNGGSIAKLSVKYYTKGDAIPSEEEIKNGKAKGEGIFKALEGYCVANPDYN.

It belongs to the BetVI family.

This is Disease resistance response protein DRRG49-C from Pisum sativum (Garden pea).